The following is a 37-amino-acid chain: U1-ectatotoxin-Eb1a subunit B (37 aa).

It belongs to the ectatomin family. Ectatomin-Eq subfamily. In terms of assembly, heterodimer of subunits A and B; disulfide-linked. Expressed by the venom gland.

The protein localises to the secreted. It localises to the target cell membrane. This chain is U1-ectatotoxin-Eb1a subunit B, found in Ectatomma brunneum (Ant).